Consider the following 293-residue polypeptide: Probable flavonol synthase 6 (293 aa).

The region spanning 156 to 253 is the Fe2OG dioxygenase domain; sequence KAQYVMRINY…RMSWPILVEP (98 aa). 164-166 contributes to the 2-oxoglutarate binding site; the sequence is NYY. Fe cation-binding residues include His-178, Asp-180, and His-234. Position 244–246 (244–246) interacts with 2-oxoglutarate; sequence RMS.

It belongs to the iron/ascorbate-dependent oxidoreductase family. The cofactor is Fe(2+).

The enzyme catalyses a (2R,3R)-dihydroflavonol + 2-oxoglutarate + O2 = a flavonol + succinate + CO2 + H2O. It functions in the pathway secondary metabolite biosynthesis; flavonoid biosynthesis. The protein is Probable flavonol synthase 6 (FLS6) of Arabidopsis thaliana (Mouse-ear cress).